A 292-amino-acid polypeptide reads, in one-letter code: Forkhead box protein R1 (292 aa).

Disordered regions lie at residues 31 to 50 and 65 to 166; these read PPKLPLEKKPNPDKDGPDYE and PGKL…ASSQ. Composition is skewed to basic and acidic residues over residues 35–47 and 70–79; these read PLEKKPNPDKDGP and VSGRRKREDL. Positions 80–89 are enriched in polar residues; that stretch reads TSTLPSSQPP. A compositionally biased stretch (acidic residues) spans 129–140; the sequence is LTEEEEAEDQED. A compositionally biased stretch (basic residues) spans 149-161; the sequence is PHKRAPLQSRRLR. Positions 173 to 272 form a DNA-binding region, fork-head; it reads RPPLNYFHLI…EEARALASTR (100 aa).

As to expression, expressed in testis (at protein level).

It is found in the nucleus. It localises to the cytoplasm. The protein localises to the perinuclear region. Transcription factor which acts as both an activator and a repressor. Activates transcription of a number of genes including the heat shock chaperones HSPA1A and HSPA6 and the antioxidant NADPH-dependent reductase DHRS2 which are involved in protection against oxidative stress. Required for normal brain development. This chain is Forkhead box protein R1 (FOXR1), found in Homo sapiens (Human).